Reading from the N-terminus, the 228-residue chain is Enolase-phosphatase E1 (228 aa).

The protein belongs to the HAD-like hydrolase superfamily. MasA/MtnC family. In terms of assembly, monomer. The cofactor is Mg(2+).

It catalyses the reaction 5-methylsulfanyl-2,3-dioxopentyl phosphate + H2O = 1,2-dihydroxy-5-(methylsulfanyl)pent-1-en-3-one + phosphate. Its pathway is amino-acid biosynthesis; L-methionine biosynthesis via salvage pathway; L-methionine from S-methyl-5-thio-alpha-D-ribose 1-phosphate: step 3/6. The protein operates within amino-acid biosynthesis; L-methionine biosynthesis via salvage pathway; L-methionine from S-methyl-5-thio-alpha-D-ribose 1-phosphate: step 4/6. In terms of biological role, bifunctional enzyme that catalyzes the enolization of 2,3-diketo-5-methylthiopentyl-1-phosphate (DK-MTP-1-P) into the intermediate 2-hydroxy-3-keto-5-methylthiopentenyl-1-phosphate (HK-MTPenyl-1-P), which is then dephosphorylated to form the acireductone 1,2-dihydroxy-3-keto-5-methylthiopentene (DHK-MTPene). This Picosynechococcus sp. (strain ATCC 27264 / PCC 7002 / PR-6) (Agmenellum quadruplicatum) protein is Enolase-phosphatase E1.